The chain runs to 368 residues: Quinolinate synthase (368 aa).

Iminosuccinate is bound by residues His46 and Ser63. Cys110 contacts [4Fe-4S] cluster. Iminosuccinate is bound by residues 141-143 and Ser162; that span reads YVN. Cys230 contributes to the [4Fe-4S] cluster binding site. Residues 256-258 and Thr273 contribute to the iminosuccinate site; that span reads HPE. Residue Cys320 coordinates [4Fe-4S] cluster.

Belongs to the quinolinate synthase family. Type 3 subfamily. Requires [4Fe-4S] cluster as cofactor.

The protein resides in the cytoplasm. It catalyses the reaction iminosuccinate + dihydroxyacetone phosphate = quinolinate + phosphate + 2 H2O + H(+). It functions in the pathway cofactor biosynthesis; NAD(+) biosynthesis; quinolinate from iminoaspartate: step 1/1. Catalyzes the condensation of iminoaspartate with dihydroxyacetone phosphate to form quinolinate. The protein is Quinolinate synthase of Bacillus cereus (strain ZK / E33L).